We begin with the raw amino-acid sequence, 165 residues long: Thiol peroxidase (165 aa).

One can recognise a Thioredoxin domain in the interval 18–165 (PQKGAQAPAF…PNYAAALAAL (148 aa)). The active-site Cysteine sulfenic acid (-SOH) intermediate is the Cys60. A disulfide bridge connects residues Cys60 and Cys94.

The protein belongs to the peroxiredoxin family. Tpx subfamily. Homodimer.

It carries out the reaction a hydroperoxide + [thioredoxin]-dithiol = an alcohol + [thioredoxin]-disulfide + H2O. Thiol-specific peroxidase that catalyzes the reduction of hydrogen peroxide and organic hydroperoxides to water and alcohols, respectively. Plays a role in cell protection against oxidative stress by detoxifying peroxides. This Pseudomonas aeruginosa (strain ATCC 15692 / DSM 22644 / CIP 104116 / JCM 14847 / LMG 12228 / 1C / PRS 101 / PAO1) protein is Thiol peroxidase.